We begin with the raw amino-acid sequence, 117 residues long: Anti-adapter protein IraM (117 aa).

Belongs to the IraM/RssC family.

It is found in the cytoplasm. Functionally, involved in the stabilization of the sigma stress factor RpoS. The polypeptide is Anti-adapter protein IraM (Klebsiella pneumoniae (strain 342)).